The chain runs to 326 residues: Phospho-N-acetylmuramoyl-pentapeptide-transferase (326 aa).

The next 9 membrane-spanning stretches (helical) occupy residues 3-23 (ISIS…PAFI), 51-71 (TMGG…FALF), 79-99 (VGMI…DDFL), 115-135 (LALQ…GGDI), 138-158 (VFGY…FWLV), 169-189 (GVDG…GVIA), 195-215 (MDIL…FIFN), 221-243 (VFMG…MALH), and 306-326 (FFFW…LYLM).

The protein belongs to the glycosyltransferase 4 family. MraY subfamily. It depends on Mg(2+) as a cofactor.

Its subcellular location is the cell membrane. It catalyses the reaction UDP-N-acetyl-alpha-D-muramoyl-L-alanyl-gamma-D-glutamyl-L-lysyl-D-alanyl-D-alanine + di-trans,octa-cis-undecaprenyl phosphate = Mur2Ac(oyl-L-Ala-gamma-D-Glu-L-Lys-D-Ala-D-Ala)-di-trans,octa-cis-undecaprenyl diphosphate + UMP. The protein operates within cell wall biogenesis; peptidoglycan biosynthesis. Catalyzes the initial step of the lipid cycle reactions in the biosynthesis of the cell wall peptidoglycan: transfers peptidoglycan precursor phospho-MurNAc-pentapeptide from UDP-MurNAc-pentapeptide onto the lipid carrier undecaprenyl phosphate, yielding undecaprenyl-pyrophosphoryl-MurNAc-pentapeptide, known as lipid I. The polypeptide is Phospho-N-acetylmuramoyl-pentapeptide-transferase (Streptococcus pneumoniae serotype 2 (strain D39 / NCTC 7466)).